A 252-amino-acid polypeptide reads, in one-letter code: tRNA (guanine-N(1)-)-methyltransferase (252 aa).

Residues G116 and 135–140 (LGDYVL) contribute to the S-adenosyl-L-methionine site.

The protein belongs to the RNA methyltransferase TrmD family. In terms of assembly, homodimer.

It localises to the cytoplasm. The enzyme catalyses guanosine(37) in tRNA + S-adenosyl-L-methionine = N(1)-methylguanosine(37) in tRNA + S-adenosyl-L-homocysteine + H(+). Specifically methylates guanosine-37 in various tRNAs. This is tRNA (guanine-N(1)-)-methyltransferase from Limosilactobacillus reuteri (strain DSM 20016) (Lactobacillus reuteri).